The sequence spans 412 residues: Imidazolonepropionase (412 aa).

2 residues coordinate Fe(3+): His-76 and His-78. The Zn(2+) site is built by His-76 and His-78. Residues Arg-85, Tyr-148, and His-181 each contribute to the 4-imidazolone-5-propanoate site. Tyr-148 serves as a coordination point for N-formimidoyl-L-glutamate. His-242 contacts Fe(3+). Zn(2+) is bound at residue His-242. Glu-245 provides a ligand contact to 4-imidazolone-5-propanoate. Asp-317 contacts Fe(3+). Asp-317 contributes to the Zn(2+) binding site. Residues Asn-319 and Gly-321 each coordinate N-formimidoyl-L-glutamate. Residue Ser-322 participates in 4-imidazolone-5-propanoate binding.

Belongs to the metallo-dependent hydrolases superfamily. HutI family. The cofactor is Zn(2+). Fe(3+) is required as a cofactor.

It is found in the cytoplasm. The enzyme catalyses 4-imidazolone-5-propanoate + H2O = N-formimidoyl-L-glutamate. It participates in amino-acid degradation; L-histidine degradation into L-glutamate; N-formimidoyl-L-glutamate from L-histidine: step 3/3. Its function is as follows. Catalyzes the hydrolytic cleavage of the carbon-nitrogen bond in imidazolone-5-propanoate to yield N-formimidoyl-L-glutamate. It is the third step in the universal histidine degradation pathway. This chain is Imidazolonepropionase, found in Staphylococcus aureus (strain MSSA476).